Consider the following 796-residue polypeptide: Endonuclease MutS2 (796 aa).

Residue 339–346 (GPNTGGKT) participates in ATP binding. Residues 620–644 (EKLGDTDSSLVSKAKKNRKQHKPSD) form a disordered region. Positions 721–796 (LNIIGKRVDE…DHGVTIVEFK (76 aa)) constitute a Smr domain.

The protein belongs to the DNA mismatch repair MutS family. MutS2 subfamily. As to quaternary structure, homodimer. Binds to stalled ribosomes, contacting rRNA.

Endonuclease that is involved in the suppression of homologous recombination and thus may have a key role in the control of bacterial genetic diversity. In terms of biological role, acts as a ribosome collision sensor, splitting the ribosome into its 2 subunits. Detects stalled/collided 70S ribosomes which it binds and splits by an ATP-hydrolysis driven conformational change. Acts upstream of the ribosome quality control system (RQC), a ribosome-associated complex that mediates the extraction of incompletely synthesized nascent chains from stalled ribosomes and their subsequent degradation. Probably generates substrates for RQC. The chain is Endonuclease MutS2 from Lachnoclostridium phytofermentans (strain ATCC 700394 / DSM 18823 / ISDg) (Clostridium phytofermentans).